A 303-amino-acid chain; its full sequence is Putative 1-phosphofructokinase (303 aa).

ATP-binding positions include 217–222 (SDGDKG) and 249–250 (GD). The active-site Proton acceptor is the aspartate 250.

It belongs to the carbohydrate kinase PfkB family.

The enzyme catalyses beta-D-fructose 1-phosphate + ATP = beta-D-fructose 1,6-bisphosphate + ADP + H(+). Its function is as follows. Catalyzes the ATP-dependent phosphorylation of fructose-l-phosphate to fructose-l,6-bisphosphate. This chain is Putative 1-phosphofructokinase (fruK), found in Mycoplasma genitalium (strain ATCC 33530 / DSM 19775 / NCTC 10195 / G37) (Mycoplasmoides genitalium).